Here is a 1007-residue protein sequence, read N- to C-terminus: Probable beta-galactosidase A (1007 aa).

The N-terminal stretch at 1 to 18 (MKLSSACAIALLAAQAAG) is a signal peptide. Positions 96, 140, 141, and 142 each coordinate substrate. Asn-156 carries N-linked (GlcNAc...) asparagine glycosylation. Asn-199 is a substrate binding site. Residue Glu-200 is the Proton donor of the active site. An intrachain disulfide couples Cys-205 to Cys-206. Tyr-260 is a binding site for substrate. A disulfide bridge connects residues Cys-266 and Cys-315. Glu-298 serves as the catalytic Nucleophile. Position 364 (Tyr-364) interacts with substrate. N-linked (GlcNAc...) asparagine glycosylation is found at Asn-373, Asn-402, Asn-422, Asn-478, Asn-522, Asn-622, Asn-739, Asn-760, Asn-777, and Asn-805. A disordered region spans residues 862 to 881 (RQGFHQPEPPSQDWKSSSPL). Asn-914 carries an N-linked (GlcNAc...) asparagine glycan.

Belongs to the glycosyl hydrolase 35 family.

It localises to the secreted. It catalyses the reaction Hydrolysis of terminal non-reducing beta-D-galactose residues in beta-D-galactosides.. In terms of biological role, cleaves beta-linked terminal galactosyl residues from gangliosides, glycoproteins, and glycosaminoglycans. The polypeptide is Probable beta-galactosidase A (lacA) (Aspergillus phoenicis (Aspergillus saitoi)).